The sequence spans 82 residues: Large ribosomal subunit protein uL23 (82 aa).

This sequence belongs to the universal ribosomal protein uL23 family. As to quaternary structure, part of the 50S ribosomal subunit. Contacts protein L29.

Binds to 23S rRNA. One of the proteins that surrounds the polypeptide exit tunnel on the outside of the ribosome. The chain is Large ribosomal subunit protein uL23 from Picrophilus torridus (strain ATCC 700027 / DSM 9790 / JCM 10055 / NBRC 100828 / KAW 2/3).